A 306-amino-acid polypeptide reads, in one-letter code: Acetyl-coenzyme A carboxylase carboxyl transferase subunit beta (306 aa).

Residues 27-296 (LWHKCPSCEA…PRFVAPVIEP (270 aa)) enclose the CoA carboxyltransferase N-terminal domain. Positions 31, 34, 50, and 53 each coordinate Zn(2+). The C4-type zinc-finger motif lies at 31-53 (CPSCEAVLYRPELEKTLDVCPKC).

The protein belongs to the AccD/PCCB family. In terms of assembly, acetyl-CoA carboxylase is a heterohexamer composed of biotin carboxyl carrier protein (AccB), biotin carboxylase (AccC) and two subunits each of ACCase subunit alpha (AccA) and ACCase subunit beta (AccD). The cofactor is Zn(2+).

Its subcellular location is the cytoplasm. The enzyme catalyses N(6)-carboxybiotinyl-L-lysyl-[protein] + acetyl-CoA = N(6)-biotinyl-L-lysyl-[protein] + malonyl-CoA. It participates in lipid metabolism; malonyl-CoA biosynthesis; malonyl-CoA from acetyl-CoA: step 1/1. Its function is as follows. Component of the acetyl coenzyme A carboxylase (ACC) complex. Biotin carboxylase (BC) catalyzes the carboxylation of biotin on its carrier protein (BCCP) and then the CO(2) group is transferred by the transcarboxylase to acetyl-CoA to form malonyl-CoA. The protein is Acetyl-coenzyme A carboxylase carboxyl transferase subunit beta of Pseudomonas savastanoi pv. phaseolicola (strain 1448A / Race 6) (Pseudomonas syringae pv. phaseolicola (strain 1448A / Race 6)).